An 84-amino-acid chain; its full sequence is Cell division topological specificity factor (84 aa).

This sequence belongs to the MinE family.

Its function is as follows. Prevents the cell division inhibition by proteins MinC and MinD at internal division sites while permitting inhibition at polar sites. This ensures cell division at the proper site by restricting the formation of a division septum at the midpoint of the long axis of the cell. This is Cell division topological specificity factor from Azotobacter vinelandii (strain DJ / ATCC BAA-1303).